Consider the following 338-residue polypeptide: Holliday junction branch migration complex subunit RuvB (338 aa).

Positions 1–184 (MTEEERLLSA…FGIISHMEYY (184 aa)) are large ATPase domain (RuvB-L). Residues L23, R24, G65, K68, T69, T70, 131 to 133 (EDF), R174, Y184, and R221 each bind ATP. T69 is a binding site for Mg(2+). A small ATPAse domain (RuvB-S) region spans residues 185–255 (QEQDLKEIVL…IADKALTLLQ (71 aa)). The tract at residues 258-338 (HQGLDYVDQK…GYDYLEGRKN (81 aa)) is head domain (RuvB-H). Residues R313 and R318 each coordinate DNA.

It belongs to the RuvB family. Homohexamer. Forms an RuvA(8)-RuvB(12)-Holliday junction (HJ) complex. HJ DNA is sandwiched between 2 RuvA tetramers; dsDNA enters through RuvA and exits via RuvB. An RuvB hexamer assembles on each DNA strand where it exits the tetramer. Each RuvB hexamer is contacted by two RuvA subunits (via domain III) on 2 adjacent RuvB subunits; this complex drives branch migration. In the full resolvosome a probable DNA-RuvA(4)-RuvB(12)-RuvC(2) complex forms which resolves the HJ.

The protein resides in the cytoplasm. The enzyme catalyses ATP + H2O = ADP + phosphate + H(+). The RuvA-RuvB-RuvC complex processes Holliday junction (HJ) DNA during genetic recombination and DNA repair, while the RuvA-RuvB complex plays an important role in the rescue of blocked DNA replication forks via replication fork reversal (RFR). RuvA specifically binds to HJ cruciform DNA, conferring on it an open structure. The RuvB hexamer acts as an ATP-dependent pump, pulling dsDNA into and through the RuvAB complex. RuvB forms 2 homohexamers on either side of HJ DNA bound by 1 or 2 RuvA tetramers; 4 subunits per hexamer contact DNA at a time. Coordinated motions by a converter formed by DNA-disengaged RuvB subunits stimulates ATP hydrolysis and nucleotide exchange. Immobilization of the converter enables RuvB to convert the ATP-contained energy into a lever motion, pulling 2 nucleotides of DNA out of the RuvA tetramer per ATP hydrolyzed, thus driving DNA branch migration. The RuvB motors rotate together with the DNA substrate, which together with the progressing nucleotide cycle form the mechanistic basis for DNA recombination by continuous HJ branch migration. Branch migration allows RuvC to scan DNA until it finds its consensus sequence, where it cleaves and resolves cruciform DNA. The sequence is that of Holliday junction branch migration complex subunit RuvB from Enterococcus faecalis (strain ATCC 700802 / V583).